Reading from the N-terminus, the 628-residue chain is Phomenoic acid biosynthesis cluster MFS-type transporter (628 aa).

Transmembrane regions (helical) follow at residues 102–122, 150–170, 174–194, 204–224, 232–252, 262–282, 302–322, 329–349, 375–395, 407–427, 435–455, 488–508, 524–544, and 595–615; these read IHGF…FLYA, VGFV…YGIL, WLYI…GAAP, VFAG…LSIN, AYLS…PVIG, WAFY…FFLL, FVGA…INFG, NSGT…AFAV, MLLF…IYFI, ALDS…TILV, FGYY…ANVF, GFEA…YAVI, IMIA…AVFI, and AKAF…SLGF.

It belongs to the major facilitator superfamily. TCR/Tet family.

It is found in the cell membrane. Its function is as follows. MFS-type transporter; part of the gene cluster that mediates the biosynthesis of phomenoic acid, a long chain aliphatic carboxylic acid that does not appear to be essential for pathogenicity but may play a role in allowing to outcompete other fungi in the environmental niche via its antifungal properties. Is probably involved in the efflux of phomenoic acid. This chain is Phomenoic acid biosynthesis cluster MFS-type transporter, found in Leptosphaeria maculans (strain JN3 / isolate v23.1.3 / race Av1-4-5-6-7-8) (Blackleg fungus).